We begin with the raw amino-acid sequence, 498 residues long: U4/U6 small nuclear ribonucleoprotein Prp31 (498 aa).

Residues 1–24 (MSLADELLADLEEAAEEEEENLID) form a disordered region. A compositionally biased stretch (acidic residues) spans 7 to 24 (LLADLEEAAEEEEENLID). 2 coiled-coil regions span residues 84-119 (EAAP…KYSK) and 180-214 (DEEL…MSFI). In terms of domain architecture, Nop spans 214–332 (IAPNLSIIVG…IERKFDKWQE (119 aa)). Residues 333 to 356 (PPPVKQVKPLPAPLDGQRKKRGGR) form a disordered region. Residues 350–363 (RKKRGGRRYRKMKE) carry the Nuclear localization signal (NLS) motif.

Belongs to the PRP31 family. In terms of assembly, identified in the spliceosome B complex. Component of the U4/U6-U5 tri-snRNP complex. Component of some MLL1/MLL complex.

It localises to the nucleus. The protein localises to the nucleus speckle. The protein resides in the cajal body. In terms of biological role, involved in pre-mRNA splicing as component of the spliceosome. Required for the assembly of the U4/U5/U6 tri-snRNP complex, one of the building blocks of the spliceosome. This chain is U4/U6 small nuclear ribonucleoprotein Prp31 (prpf31), found in Xenopus laevis (African clawed frog).